Here is a 182-residue protein sequence, read N- to C-terminus: Aralkylamine dehydrogenase light chain (182 aa).

A signal peptide (tat-type signal) is located at residues 1-47 (MRWLDKFGESLSRSVAHKTSRRSVLRSVGKLMVGSAFVLPVLPVARA). Intrachain disulfides connect cysteine 75–cysteine 140, cysteine 81–cysteine 113, cysteine 88–cysteine 171, cysteine 90–cysteine 138, cysteine 91–cysteine 135, cysteine 98–cysteine 129, and cysteine 130–cysteine 161. Aspartate 84 is a substrate binding site. The active-site Tryptophylquinone 6'-substrate hemiaminal intermediate is the tryptophan 109. Tryptophan 109 is subject to Tryptophylquinone. Positions 109–160 (WIGTCHNPHDGKDYLISYHDCCGKTACGRCQCNTQTRERPGYEFFLHNDVNW) form a cross-link, tryptophan tryptophylquinone (Trp-Trp). Residue aspartate 128 is the Proton acceptor of the active site. Substrate is bound at residue 156–158 (NDV).

This sequence belongs to the aromatic amine dehydrogenase light chain family. In terms of assembly, heterotetramer of two light and two heavy chains. Binds two azurin molecules per heterotetramer. The cofactor is tryptophan tryptophylquinone residue. In terms of processing, tryptophan tryptophylquinone (TTQ) is formed by oxidation of the indole ring of a tryptophan to form tryptophylquinone followed by covalent cross-linking with another tryptophan residue. Predicted to be exported by the Tat system. The position of the signal peptide cleavage has been experimentally proven.

The protein localises to the periplasm. The enzyme catalyses an aralkylamine + 2 oxidized [azurin] + H2O = an aromatic aldehyde + 2 reduced [azurin] + NH4(+) + 2 H(+). With respect to regulation, irreversibly inhibited by phenylhydrazine, hydroxylamine, semicarbazide, hydrazine and aminoguanidine. Reversibly inhibited by isonicotinic acid hydrazide (isoniazid) and isonicotinic acid 2-isopropyl hydrazide (iproniazid). Functionally, oxidizes primary aromatic amines and, more slowly, some long-chain aliphatic amines, but not methylamine or ethylamine. Uses azurin as an electron acceptor to transfer electrons from the reduced tryptophylquinone cofactor. The chain is Aralkylamine dehydrogenase light chain from Alcaligenes faecalis.